Consider the following 109-residue polypeptide: Nucleoid-associated protein VV1_2004 (109 aa).

The protein belongs to the YbaB/EbfC family. Homodimer.

The protein localises to the cytoplasm. Its subcellular location is the nucleoid. Functionally, binds to DNA and alters its conformation. May be involved in regulation of gene expression, nucleoid organization and DNA protection. The sequence is that of Nucleoid-associated protein VV1_2004 from Vibrio vulnificus (strain CMCP6).